The following is a 98-amino-acid chain: DNA-directed RNA polymerase subunit omega (98 aa).

Belongs to the RNA polymerase subunit omega family. In terms of assembly, the RNAP catalytic core consists of 2 alpha, 1 beta, 1 beta' and 1 omega subunit. When a sigma factor is associated with the core the holoenzyme is formed, which can initiate transcription.

It catalyses the reaction RNA(n) + a ribonucleoside 5'-triphosphate = RNA(n+1) + diphosphate. Its function is as follows. Promotes RNA polymerase assembly. Latches the N- and C-terminal regions of the beta' subunit thereby facilitating its interaction with the beta and alpha subunits. This chain is DNA-directed RNA polymerase subunit omega, found in Xylella fastidiosa (strain M12).